Consider the following 252-residue polypeptide: MNQPLLSVNNLTHLYAPGKGFSDVSFDLWPGEVLGIVGESGSGKTTLLKSISARLTPQQGEIHYENRSLYAMSEADRRRLLRTEWGVVHQHPLDGLRRQVSAGGNIGERLMATGARHYGDIRATAQKWLEEVEIPANRIDDLPTTFSGGMQQRLQIARNLVTHPKLVFMDEPTGGLDVSVQARLLDLLRGLVVELNLAVVIVTHDLGVARLLADRLLVMKQGQVVESGLTDRVLDDPHHPYTQLLVSSVLQN.

The ABC transporter domain maps to 6 to 246 (LSVNNLTHLY…PHHPYTQLLV (241 aa)). 38–45 (GESGSGKT) provides a ligand contact to ATP.

This sequence belongs to the ABC transporter superfamily. Forms a complex with PhnG, PhnH, PhnI and PhnJ with the suggested composition PhnG(4)H(2)I(2)J(2)K.

Functionally, belongs to an operon involved in alkylphosphonate uptake and C-P lyase. Exact function not known. PhnK is not required for the ribophosphonate triphosphate (RPnTP) synthase reaction. The protein is Putative phosphonates utilization ATP-binding protein PhnK (phnK) of Escherichia coli (strain K12).